A 429-amino-acid chain; its full sequence is Methylenetetrahydrofolate--tRNA-(uracil-5-)-methyltransferase TrmFO (429 aa).

Position 7–12 (7–12 (GAGLAG)) interacts with FAD.

This sequence belongs to the MnmG family. TrmFO subfamily. FAD serves as cofactor.

It localises to the cytoplasm. The enzyme catalyses uridine(54) in tRNA + (6R)-5,10-methylene-5,6,7,8-tetrahydrofolate + NADH + H(+) = 5-methyluridine(54) in tRNA + (6S)-5,6,7,8-tetrahydrofolate + NAD(+). The catalysed reaction is uridine(54) in tRNA + (6R)-5,10-methylene-5,6,7,8-tetrahydrofolate + NADPH + H(+) = 5-methyluridine(54) in tRNA + (6S)-5,6,7,8-tetrahydrofolate + NADP(+). In terms of biological role, catalyzes the folate-dependent formation of 5-methyl-uridine at position 54 (M-5-U54) in all tRNAs. The protein is Methylenetetrahydrofolate--tRNA-(uracil-5-)-methyltransferase TrmFO of Thermosipho africanus (strain TCF52B).